The primary structure comprises 407 residues: Arrestin red cell isoform 1 (407 aa).

It belongs to the arrestin family.

It localises to the cytoplasm. The polypeptide is Arrestin red cell isoform 1 (Oncorhynchus mykiss (Rainbow trout)).